Reading from the N-terminus, the 96-residue chain is DNA/RNA-binding protein Alba (96 aa).

This sequence belongs to the histone-like Alba family.

The protein localises to the cytoplasm. Its subcellular location is the chromosome. Its function is as follows. Binds double-stranded DNA tightly but without sequence specificity. Involved in DNA compaction. The chain is DNA/RNA-binding protein Alba from Methanocella arvoryzae (strain DSM 22066 / NBRC 105507 / MRE50).